Here is a 427-residue protein sequence, read N- to C-terminus: Glutamate-1-semialdehyde 2,1-aminomutase (427 aa).

Lys-265 is modified (N6-(pyridoxal phosphate)lysine).

This sequence belongs to the class-III pyridoxal-phosphate-dependent aminotransferase family. HemL subfamily. As to quaternary structure, homodimer. Pyridoxal 5'-phosphate serves as cofactor.

It is found in the cytoplasm. The catalysed reaction is (S)-4-amino-5-oxopentanoate = 5-aminolevulinate. Its pathway is porphyrin-containing compound metabolism; protoporphyrin-IX biosynthesis; 5-aminolevulinate from L-glutamyl-tRNA(Glu): step 2/2. The chain is Glutamate-1-semialdehyde 2,1-aminomutase from Burkholderia lata (strain ATCC 17760 / DSM 23089 / LMG 22485 / NCIMB 9086 / R18194 / 383).